The chain runs to 344 residues: MRMDERKQKVLAAVIQDYILTGEPVGSRTIARRYNLGVSPATIRNEMADLEEMGLLEQPHTSAGRIPSDQGYRYYVDCLMPPAHLTPEEEEYVRRRYNQKMLEIEQVLAETTRLISEMTSYAAIALGPDQGRASLEEVQVLPIQVANKALLVAVTSTGVVEHRVLTIPEGVTPEDLNRISRVLNARLQGRALEDLRQMVLSDIYQELAQHRNLVNLVRDLLQQLLSLESGERVYRNGTLNILNQPEFKDLDRVREILSFLDQDEALRRIFMTTPSTGLTIRIGQENKIEGIDKCSVVTISYAVEGKIMGKVGLLGPTRMQYSRAISVLRCVADALSQTLEQLYR.

The protein belongs to the HrcA family.

Negative regulator of class I heat shock genes (grpE-dnaK-dnaJ and groELS operons). Prevents heat-shock induction of these operons. This chain is Heat-inducible transcription repressor HrcA, found in Moorella thermoacetica (strain ATCC 39073 / JCM 9320).